Reading from the N-terminus, the 180-residue chain is Oligoribonuclease (180 aa).

An Exonuclease domain is found at 7–170; sequence LIWIDLEMTG…DDIRESIAEL (164 aa). The active site involves tyrosine 128.

This sequence belongs to the oligoribonuclease family.

It is found in the cytoplasm. Functionally, 3'-to-5' exoribonuclease specific for small oligoribonucleotides. This Pseudomonas putida (strain ATCC 700007 / DSM 6899 / JCM 31910 / BCRC 17059 / LMG 24140 / F1) protein is Oligoribonuclease.